The sequence spans 456 residues: MSSSNNIYHILDDLVKMVIRAFYPDEYAVIIDGLLREKKRIKDEDLALRLRIQQKYVRKILMDLKGDSMVKSSDVKVEAKGPNERGSTHLLWYIDYKHIIDIVKYKLYMFRKKMESVKVQKIDVQTYKCQTCHKVYTALDIPKLLNMDTGALACEICDGELEEELNNESLTQTAKHQSDLFSQLRKIIEQLKKTEGHNIPLFARDLADLSADQGPSYTINTNSSLGMGPKPSAFPVAQGAATSHHIDPTNENIEFHVDILDTDGIEINKAVVKKENKKTGLASLPPWLLPSNSFKNRNVKSNSILNNNQQTQTSTNEQPTAVKEQIKIDQDFYINYIKTHYQEWESAPDSGDADGNGSNSGSGGSTIEGNDGGNGEHQNKKMKLDDSQTVSSMSQSDDDGKDILVRVGDNLIPITKITEHDQELMSNQEYEDYSHALYSYASKNVFDHQYQSLMSN.

An HTH TFE/IIEalpha-type domain is found at 11 to 100 (LDDLVKMVIR…LWYIDYKHII (90 aa)). The segment at 129–157 (CQTCHKVYTALDIPKLLNMDTGALACEIC) adopts a C4-type zinc-finger fold. The interval 345 to 402 (ESAPDSGDADGNGSNSGSGGSTIEGNDGGNGEHQNKKMKLDDSQTVSSMSQSDDDGKD) is disordered. A compositionally biased stretch (low complexity) spans 347–357 (APDSGDADGNG). Residues 358–375 (SNSGSGGSTIEGNDGGNG) show a composition bias toward gly residues. The segment covering 377–386 (HQNKKMKLDD) has biased composition (basic and acidic residues).

The protein belongs to the TFIIE alpha subunit family. TFIIE is a tetramer of two alpha and two beta subunits.

The protein localises to the nucleus. In terms of biological role, recruits TFIIH to the initiation complex and stimulates the RNA polymerase II C-terminal domain kinase and DNA-dependent ATPase activities of TFIIH. Both TFIIH and TFIIE are required for promoter clearance by RNA polymerase. The polypeptide is General transcription factor IIE subunit 1 (gtf2e1-1) (Dictyostelium discoideum (Social amoeba)).